A 335-amino-acid chain; its full sequence is Nod factor export ATP-binding protein I (335 aa).

The region spanning 37 to 267 is the ABC transporter domain; that stretch reads IDVASVTKSY…KIGCQVIEIY (231 aa). 69–76 contacts ATP; sequence GPNGAGKS.

The protein belongs to the ABC transporter superfamily. Lipooligosaccharide exporter (TC 3.A.1.102) family. The complex is composed of two ATP-binding proteins (NodI) and two transmembrane proteins (NodJ).

The protein resides in the cell inner membrane. Part of the ABC transporter complex NodIJ involved in the export of the nodulation factors (Nod factors), the bacterial signal molecules that induce symbiosis and subsequent nodulation induction. Nod factors are LCO (lipo-chitin oligosaccharide), a modified beta-1,4-linked N-acetylglucosamine oligosaccharide. This subunit is responsible for energy coupling to the transport system. This chain is Nod factor export ATP-binding protein I, found in Rhizobium meliloti (strain 1021) (Ensifer meliloti).